The sequence spans 236 residues: Orotidine 5'-phosphate decarboxylase (236 aa).

Residues Asp17, Lys39, 66–75, Thr125, Arg187, Gln196, Gly216, and Arg217 contribute to the substrate site; that span reads DLKFYDIPNT. Residue Lys68 is the Proton donor of the active site.

The protein belongs to the OMP decarboxylase family. Type 1 subfamily. In terms of assembly, homodimer.

It catalyses the reaction orotidine 5'-phosphate + H(+) = UMP + CO2. It functions in the pathway pyrimidine metabolism; UMP biosynthesis via de novo pathway; UMP from orotate: step 2/2. Catalyzes the decarboxylation of orotidine 5'-monophosphate (OMP) to uridine 5'-monophosphate (UMP). This chain is Orotidine 5'-phosphate decarboxylase, found in Buchnera aphidicola subsp. Baizongia pistaciae (strain Bp).